Consider the following 527-residue polypeptide: Peptide chain release factor 3 (527 aa).

Residues aspartate 10 to leucine 278 enclose the tr-type G domain. Residues serine 19 to threonine 26, aspartate 87 to histidine 91, and asparagine 141 to aspartate 144 contribute to the GTP site.

This sequence belongs to the TRAFAC class translation factor GTPase superfamily. Classic translation factor GTPase family. PrfC subfamily.

It localises to the cytoplasm. In terms of biological role, increases the formation of ribosomal termination complexes and stimulates activities of RF-1 and RF-2. It binds guanine nucleotides and has strong preference for UGA stop codons. It may interact directly with the ribosome. The stimulation of RF-1 and RF-2 is significantly reduced by GTP and GDP, but not by GMP. The polypeptide is Peptide chain release factor 3 (Pelobacter propionicus (strain DSM 2379 / NBRC 103807 / OttBd1)).